Consider the following 93-residue polypeptide: UPF0358 protein lwe1048 (93 aa).

This sequence belongs to the UPF0358 family.

In Listeria welshimeri serovar 6b (strain ATCC 35897 / DSM 20650 / CCUG 15529 / CIP 8149 / NCTC 11857 / SLCC 5334 / V8), this protein is UPF0358 protein lwe1048.